Here is a 351-residue protein sequence, read N- to C-terminus: Phosphoribosylformylglycinamidine cyclo-ligase (351 aa).

The protein belongs to the AIR synthase family.

The protein localises to the cytoplasm. The enzyme catalyses 2-formamido-N(1)-(5-O-phospho-beta-D-ribosyl)acetamidine + ATP = 5-amino-1-(5-phospho-beta-D-ribosyl)imidazole + ADP + phosphate + H(+). Its pathway is purine metabolism; IMP biosynthesis via de novo pathway; 5-amino-1-(5-phospho-D-ribosyl)imidazole from N(2)-formyl-N(1)-(5-phospho-D-ribosyl)glycinamide: step 2/2. This Burkholderia cenocepacia (strain ATCC BAA-245 / DSM 16553 / LMG 16656 / NCTC 13227 / J2315 / CF5610) (Burkholderia cepacia (strain J2315)) protein is Phosphoribosylformylglycinamidine cyclo-ligase.